Reading from the N-terminus, the 514-residue chain is Sugar transport protein 11 (514 aa).

Over 1–19 the chain is Cytoplasmic; sequence MAGGAFIDESGHGGDYEGR. The helical transmembrane segment at 20–40 threads the bilayer; it reads VTAFVMITCIVAAMGGLLFGY. At 41-82 the chain is on the extracellular side; that stretch reads DIGISGGVISMEDFLTKFFPDVLRQMQNKRGRETEYCKYDNE. Residues 83–103 form a helical membrane-spanning segment; the sequence is LLTLFTSSLYLAALFASFLAS. Topologically, residues 104–112 are cytoplasmic; the sequence is TITRLFGRK. The chain crosses the membrane as a helical span at residues 113–133; it reads VSMVIGSLAFLSGALLNGLAI. Topologically, residues 134–137 are extracellular; the sequence is NLEM. Residues 138–158 traverse the membrane as a helical segment; it reads LIIGRLFLGVGVGFANQSVPL. Residues 159–169 lie on the Cytoplasmic side of the membrane; it reads YLSEMAPAKIR. The helical transmembrane segment at 170-190 threads the bilayer; the sequence is GALNIGFQLAITIGILAANIV. Over 191–204 the chain is Extracellular; it reads NYVTPKLQNGIGWR. A helical transmembrane segment spans residues 205–225; it reads LSLGLAGVPAVMMLVGCFFLP. The Cytoplasmic segment spans residues 226-290; sequence DTPNSILERG…RYRPQLTFCT (65 aa). Residues 291 to 311 form a helical membrane-spanning segment; it reads FIPFFQQLTGINVIMFYAPVL. Topologically, residues 312-320 are extracellular; sequence FKTIGFGND. The chain crosses the membrane as a helical span at residues 321-341; sequence ASLISAVITGLVNVLSTIVSI. The Cytoplasmic segment spans residues 342–350; it reads YSVDKFGRR. The chain crosses the membrane as a helical span at residues 351–371; sequence ALFLQGGFQMIVTQIAVGSMI. The Extracellular segment spans residues 372–389; that stretch reads GWKFGFNGEGNLSGVDAD. Residues 390–410 traverse the membrane as a helical segment; it reads IILALICLYVAGFAWSWGPLG. The Cytoplasmic segment spans residues 411 to 428; the sequence is WLVPSEICPLEIRSAGQS. A helical membrane pass occupies residues 429 to 449; it reads LNVSVNMFFTFFIGQFFLTML. Topologically, residues 450-453 are extracellular; that stretch reads CHMK. A helical transmembrane segment spans residues 454 to 474; the sequence is FGLFYFFAGMVLIMTIFIYFL. Residues 475 to 514 are Cytoplasmic-facing; it reads LPETKGVPIEEMGKVWKEHRYWGKYSNNDDGDDVDDDAYF.

Belongs to the major facilitator superfamily. Sugar transporter (TC 2.A.1.1) family. As to expression, specifically expressed in germinating pollen and pollen tube (at protein level).

It is found in the cell membrane. With respect to regulation, inhibited by uncouplers such as 2,4-dinitrophenol and carbonyl cyanide-m-chlorophenyl-hydrazone. Functionally, mediates an active uptake of hexoses, probably by sugar/hydrogen symport. Can transport glucose, galactose, mannose, xylose and 3-O-methylglucose, but not fructose and ribose. The polypeptide is Sugar transport protein 11 (STP11) (Arabidopsis thaliana (Mouse-ear cress)).